The chain runs to 348 residues: N-formyl peptide receptor 2 (348 aa).

N-linked (GlcNAc...) asparagine glycosylation is present at N1. Topologically, residues 1 to 24 (NFSTPLSEYEEVSYESAGYTVLQI) are extracellular. The helical transmembrane segment at 25-47 (LPLVVLGVTFVLGVLGNGLVIWV) threads the bilayer. At 48 to 58 (AGFRMTRTVTT) the chain is on the cytoplasmic side. Residues 59–80 (ICYLNLALADFSFTATLPFLIV) traverse the membrane as a helical segment. The Extracellular portion of the chain corresponds to 81–97 (SMAMGEKWPFGWFLCKL). Residues C95 and C173 are joined by a disulfide bond. Residues 98-118 (IHIVVDINLFGSVFLIGFIAL) form a helical membrane-spanning segment. At 119 to 137 (DRCICVLHPVWAQNHRTVS) the chain is on the cytoplasmic side. A helical transmembrane segment spans residues 138-159 (LAMKVIVGPWILALVLTLPVFL). Residues 160-202 (FLTTVTIPNGDTYCTFNFASWGGTPEKRLKVAITMLTARGIIR) lie on the Extracellular side of the membrane. Residues 203 to 223 (FVIGFSMPMSIVATCYGLIAA) form a helical membrane-spanning segment. The Cytoplasmic portion of the chain corresponds to 224-239 (KIHKKGMIKSSRPLRV). The chain crosses the membrane as a helical span at residues 240–263 (LTAVVASFFICWFPFQLVALLSTV). Residues 264-283 (WLKEILVDGKYKIINILVNP) lie on the Extracellular side of the membrane. Residues 284 to 303 (TSSLAFFNSCLNPMLYVFVG) traverse the membrane as a helical segment. Residues 304–348 (QDFRERLIHSLPTSLERALSEDSAPTNDTAASCASPPAETELQAM) are Cytoplasmic-facing. Positions 322–348 (LSEDSAPTNDTAASCASPPAETELQAM) are disordered. Over residues 326–335 (SAPTNDTAAS) the composition is skewed to polar residues.

The protein belongs to the G-protein coupled receptor 1 family. Interacts with APP; the interaction takes place at the cell surface and the complex is then rapidly internalized.

The protein localises to the cell membrane. In terms of biological role, low affinity receptor for N-formyl-methionyl peptides, which are powerful neutrophil chemotactic factors. Binding of FMLP to the receptor causes activation of neutrophils. This response is mediated via a G-protein that activates a phosphatidylinositol-calcium second messenger system. Receptor for the chemokine-like protein FAM19A5, mediating FAM19A5-stimulated macrophage chemotaxis and the inhibitory effect on TNFSF11/RANKL-induced osteoclast differentiation. This is N-formyl peptide receptor 2 (FPR2) from Macaca mulatta (Rhesus macaque).